Consider the following 879-residue polypeptide: Oxysterol-binding protein-related protein 5 (879 aa).

A disordered region spans residues 1 to 73; sequence MKEEAFLRRR…TPSSATKVPP (73 aa). S12 carries the phosphoserine modification. Residues 93 to 123 adopt a coiled-coil conformation; the sequence is VTKKETLKAQKENYRQEKKRATRQLLSALTD. In terms of domain architecture, PH spans 126–243; that stretch reads VVIMADSLKI…WLDALELALR (118 aa). A disordered region spans residues 254 to 341; that stretch reads KPGRDGEPGT…TPGAPVRRGT (88 aa). Composition is skewed to basic and acidic residues over residues 300-309 and 316-325; these read FSDKSERENP and TQDHSRKTES. A 1,2-diacyl-sn-glycero-3-phospho-(1D-myo-inositol 4-phosphate)-binding positions include 384–389, 446–449, and 478–479; these read LSRVVL, KPYN, and HH. A 1,2-diacyl-sn-glycero-3-phospho-L-serine is bound by residues 384-389 and N449; that span reads LSRVVL. A 1,2-diacyl-sn-glycero-3-phospho-L-serine is bound at residue S504. The a 1,2-diacyl-sn-glycero-3-phospho-(1D-myo-inositol 4-phosphate) site is built by K670, E674, and R678. The segment at 742 to 806 is disordered; the sequence is TTFLGSPGPR…FVPGGESPCP (65 aa). Position 747 is a phosphoserine (S747). The span at 750 to 765 shows a compositional bias: basic and acidic residues; that stretch reads PRHERSGPDQRLRKAS. Positions 766–783 are enriched in polar residues; sequence DQPSGHSQATESSGSTPE. Residues 860-878 traverse the membrane as a helical segment; sequence SWFLLCVFLACQLFINHIL.

The protein belongs to the OSBP family. In terms of tissue distribution, ubiquitously expressed.

It is found in the endoplasmic reticulum membrane. Its function is as follows. Lipid transporter involved in lipid countertransport between the endoplasmic reticulum and the plasma membrane: specifically exchanges phosphatidylserine with phosphatidylinositol 4-phosphate (PI4P), delivering phosphatidylserine to the plasma membrane in exchange for PI4P, which is degraded by the SAC1/SACM1L phosphatase in the endoplasmic reticulum. Binds phosphatidylserine and PI4P in a mutually exclusive manner. May cooperate with NPC1 to mediate the exit of cholesterol from endosomes/lysosomes. Binds 25-hydroxycholesterol and cholesterol. The protein is Oxysterol-binding protein-related protein 5 (OSBPL5) of Homo sapiens (Human).